A 274-amino-acid polypeptide reads, in one-letter code: Thymidylate synthase (274 aa).

DUMP is bound at residue arginine 21. A (6R)-5,10-methylene-5,6,7,8-tetrahydrofolate-binding site is contributed by histidine 51. Residue 123–124 participates in dUMP binding; sequence RR. The Nucleophile role is filled by cysteine 156. Residues 176–179, asparagine 187, and 217–219 contribute to the dUMP site; these read RSAD and HIY. Residue aspartate 179 coordinates (6R)-5,10-methylene-5,6,7,8-tetrahydrofolate. Residue alanine 273 participates in (6R)-5,10-methylene-5,6,7,8-tetrahydrofolate binding.

It belongs to the thymidylate synthase family. Bacterial-type ThyA subfamily. Homodimer.

It localises to the cytoplasm. The enzyme catalyses dUMP + (6R)-5,10-methylene-5,6,7,8-tetrahydrofolate = 7,8-dihydrofolate + dTMP. It functions in the pathway pyrimidine metabolism; dTTP biosynthesis. Catalyzes the reductive methylation of 2'-deoxyuridine-5'-monophosphate (dUMP) to 2'-deoxythymidine-5'-monophosphate (dTMP) while utilizing 5,10-methylenetetrahydrofolate (mTHF) as the methyl donor and reductant in the reaction, yielding dihydrofolate (DHF) as a by-product. This enzymatic reaction provides an intracellular de novo source of dTMP, an essential precursor for DNA biosynthesis. The chain is Thymidylate synthase from Christiangramia forsetii (strain DSM 17595 / CGMCC 1.15422 / KT0803) (Gramella forsetii).